Here is a 63-residue protein sequence, read N- to C-terminus: 2-hydroxymuconate tautomerase (63 aa).

Pro2 acts as the Proton acceptor; via imino nitrogen in catalysis.

Belongs to the 4-oxalocrotonate tautomerase family. As to quaternary structure, homohexamer.

The enzyme catalyses (2Z,4E)-2-hydroxyhexa-2,4-dienedioate = (3E)-2-oxohex-3-enedioate. It participates in aromatic compound metabolism; salicylate degradation. Catalyzes the ketonization of 2-hydroxymuconate stereoselectively to yield 2-oxo-3-hexenedioate. This is 2-hydroxymuconate tautomerase (nahJ) from Stutzerimonas stutzeri (Pseudomonas stutzeri).